The sequence spans 288 residues: Phenazine biosynthesis-like domain-containing protein 1 (288 aa).

Glu-46 is a catalytic residue.

Belongs to the PhzF family.

This chain is Phenazine biosynthesis-like domain-containing protein 1 (Pbld1), found in Mus musculus (Mouse).